The sequence spans 67 residues: uncharacterized protein (67 aa).

The next 2 membrane-spanning stretches (helical) occupy residues 10-32 and 44-66; these read NLSHVLALFLVSFILMAPYTAFI and ATLTGIVAGILSNPGLFAYMGQW.

The protein resides in the cell membrane. This is an uncharacterized protein from Archaeoglobus fulgidus (strain ATCC 49558 / DSM 4304 / JCM 9628 / NBRC 100126 / VC-16).